Reading from the N-terminus, the 95-residue chain is Large ribosomal subunit protein bL25 (95 aa).

Belongs to the bacterial ribosomal protein bL25 family. Part of the 50S ribosomal subunit; part of the 5S rRNA/L5/L18/L25 subcomplex. Contacts the 5S rRNA. Binds to the 5S rRNA independently of L5 and L18.

Its function is as follows. This is one of the proteins that binds to the 5S RNA in the ribosome where it forms part of the central protuberance. The sequence is that of Large ribosomal subunit protein bL25 from Shewanella oneidensis (strain ATCC 700550 / JCM 31522 / CIP 106686 / LMG 19005 / NCIMB 14063 / MR-1).